We begin with the raw amino-acid sequence, 810 residues long: Actin-regulating kinase PRK1 (810 aa).

Residues 22-298 (AKIIKYLTSG…CQVLEEVSRL (277 aa)) enclose the Protein kinase domain. ATP is bound by residues 28 to 36 (LTSGGFAQV) and Lys56. Asp158 (proton acceptor) is an active-site residue. Phosphoserine occurs at positions 402, 428, and 484. Disordered regions lie at residues 552–668 (FTGN…NVNI) and 733–761 (GVLD…HLRT). Phosphothreonine is present on Thr553. Residues 553–566 (TGNSVNNSRSASFD) are compositionally biased toward polar residues. At Ser556 the chain carries Phosphoserine. The segment covering 567–588 (NNNVNGNGNNTNRRLVSSSTSS) has biased composition (low complexity). Composition is skewed to basic and acidic residues over residues 594–612 (SDTK…EKRR) and 622–639 (FDQH…DYYR). The span at 645-658 (KKTQASAKTTSKPT) shows a compositional bias: low complexity. Positions 733-748 (GVLDIKTKSNGKDKSR) are enriched in basic and acidic residues. The segment at 743-756 (GKDKSRPPRPPPKP) is interaction with SH3 domain of ABP1.

It belongs to the protein kinase superfamily. Ser/Thr protein kinase family. Interacts with ABP1, which is required for proper actin patch localization.

It localises to the cytoplasm. The protein resides in the cytoskeleton. Its subcellular location is the actin patch. It catalyses the reaction L-seryl-[protein] + ATP = O-phospho-L-seryl-[protein] + ADP + H(+). The enzyme catalyses L-threonyl-[protein] + ATP = O-phospho-L-threonyl-[protein] + ADP + H(+). Protein kinase involved in the regulation of actin cytoskeleton organization and endocytosis. Phosphorylates PAN1 which disrupts the interaction between PAN1 and END3, and between PAN1 and SLA1. Phosphorylates SCD5. Preferentially, phosphorylates substrates on threonine residues in a [L/I/V/M]-x-x-[Q/N/T/S]-x-T-G motif. This Saccharomyces cerevisiae (strain ATCC 204508 / S288c) (Baker's yeast) protein is Actin-regulating kinase PRK1 (PRK1).